The primary structure comprises 485 residues: Glutamyl-tRNA(Gln) amidotransferase subunit A (485 aa).

Active-site charge relay system residues include Lys78 and Ser153. The Acyl-ester intermediate role is filled by Ser177.

Belongs to the amidase family. GatA subfamily. As to quaternary structure, heterotrimer of A, B and C subunits.

It catalyses the reaction L-glutamyl-tRNA(Gln) + L-glutamine + ATP + H2O = L-glutaminyl-tRNA(Gln) + L-glutamate + ADP + phosphate + H(+). Its function is as follows. Allows the formation of correctly charged Gln-tRNA(Gln) through the transamidation of misacylated Glu-tRNA(Gln) in organisms which lack glutaminyl-tRNA synthetase. The reaction takes place in the presence of glutamine and ATP through an activated gamma-phospho-Glu-tRNA(Gln). The protein is Glutamyl-tRNA(Gln) amidotransferase subunit A of Desulfotalea psychrophila (strain LSv54 / DSM 12343).